The sequence spans 1035 residues: MSSEKECLENMLNGYAESGRVLSRTSLVINQAVNRSIFTSTVSPAAERIRFILGEEDDSPAPPQLFTELDELLAVDGQEMEWKETARWIKFEEKVEQGGERWSKPHVATLSLHSLFELRTCIEKGTILLDLEATSLPQIVEIVINNQIELGLLKADMKENVTRTLLRKHRHQTKKSNLRSLADIGKTVSSASRLFSTPDNGSPTMTHRNLTSTSLNDVSDKPDKEQLKNKFMKKLPRDAEASNVLVGEVDFLESPFIAFVRLQQAVMLGSLTEVPVPTRFLFILLGPKGKAKSYHEIGRSIATLMSDEVFHDIAYKAKNREDLIAGIDEFLDEVIVLPLGEWDPTIRIEPPKSLPSSDKRKNMYSGGDNLQMNGDAPHDDGGGGHGDSEELQRTGRFCGGLIKDIQRKAPFFASDFYDALSIQSLSAILFIYLGTVTNAITFGGLLGDATENMQGVLESFLGTAVSGAVFCLFGGQPLTILSSTGPVLVFERLLFNFSKDNDFDYLEFRLWIGLWSAFQCLILVATDASFLVKYFTRFTEEGFSSLISFIFIYDAFKKMIKLADYYPINSHFKVDYITQYSCACFPPEPANSSWFNMTTAATTTQFLTNASTDMAYNGTIDWSLLSKKECLKYGGLLVGSNCKYVPDITLMSFILFLGTYTCSMALKKFKTSRYFPTTARKLISDFAIILSILIFCGLDALLGVDTPKLIVPSEFKPTSPNRGWFVPPFGGNPWWVYLAAAIPALLVTILIFMDQQITGVIVNRKEHKLKKGAGYHLDLFWVAILMVVCSFMALPWYVAATVISIAHIDSLKMETETSAPGEQPKFLGVREQRVTGTVVFLLTGLSVFMAPILKFIPMPVLYGVFLYMGVASLNGVQFMDRLKLLLMPPKYQPDFIYLRHVPLRRVHLFTFLQVVCLAMLWILKSTVAAIIFPVMILALVAVRKAMDYFFSQHDLSFLDDVIPEKDKKKKEDEKKKKKKKGSIDSDVEDSDCPYPEKVPSIKIPMDIMEKEPFLIDSKPSDRENSPTFLERHTSC.

At 1–421 the chain is on the cytoplasmic side; sequence MSSEKECLEN…FASDFYDALS (421 aa). Positions 192–217 are enriched in polar residues; that stretch reads SRLFSTPDNGSPTMTHRNLTSTSLND. Disordered stretches follow at residues 192 to 222 and 348 to 389; these read SRLFSTPDNGSPTMTHRNLTSTSLNDVSDKP and IEPP…GDSE. The segment covering 376-389 has biased composition (basic and acidic residues); that stretch reads APHDDGGGGHGDSE. A helical transmembrane segment spans residues 422–446; that stretch reads IQSLSAILFIYLGTVTNAITFGGLL. The Extracellular segment spans residues 447–456; it reads GDATENMQGV. Residues 457 to 475 traverse the membrane as a helical segment; the sequence is LESFLGTAVSGAVFCLFGG. Position 476 (Gln476) is a topological domain, cytoplasmic. A discontinuously helical membrane pass occupies residues 477 to 497; it reads PLTILSSTGPVLVFERLLFNF. The Extracellular portion of the chain corresponds to 498–505; it reads SKDNDFDY. A helical membrane pass occupies residues 506–526; it reads LEFRLWIGLWSAFQCLILVAT. At 527 to 540 the chain is on the cytoplasmic side; that stretch reads DASFLVKYFTRFTE. Residues 541–564 traverse the membrane as a helical segment; sequence EGFSSLISFIFIYDAFKKMIKLAD. The Extracellular portion of the chain corresponds to 565–648; the sequence is YYPINSHFKV…GSNCKYVPDI (84 aa). 4 N-linked (GlcNAc...) asparagine glycosylation sites follow: Asn591, Asn596, Asn609, and Asn617. A helical membrane pass occupies residues 649-666; that stretch reads TLMSFILFLGTYTCSMAL. At 667–681 the chain is on the cytoplasmic side; that stretch reads KKFKTSRYFPTTARK. The helical transmembrane segment at 682-701 threads the bilayer; the sequence is LISDFAIILSILIFCGLDAL. Over 702–735 the chain is Extracellular; the sequence is LGVDTPKLIVPSEFKPTSPNRGWFVPPFGGNPWW. A helical membrane pass occupies residues 736-763; the sequence is VYLAAAIPALLVTILIFMDQQITGVIVN. Over 764-775 the chain is Cytoplasmic; sequence RKEHKLKKGAGY. A helical membrane pass occupies residues 776-792; the sequence is HLDLFWVAILMVVCSFM. Residue Ala793 is a topological domain, extracellular. The chain crosses the membrane as a discontinuously helical span at residues 794-811; the sequence is LPWYVAATVISIAHIDSL. The Cytoplasmic segment spans residues 812 to 833; it reads KMETETSAPGEQPKFLGVREQR. The helical transmembrane segment at 834 to 850 threads the bilayer; the sequence is VTGTVVFLLTGLSVFMA. Residues 851–857 are Extracellular-facing; the sequence is PILKFIP. Residues 858-874 traverse the membrane as a helical segment; sequence MPVLYGVFLYMGVASLN. The Cytoplasmic portion of the chain corresponds to 875–916; that stretch reads GVQFMDRLKLLLMPPKYQPDFIYLRHVPLRRVHLFTFLQVVC. The segment at residues 917–942 is an intramembrane region (discontinuously helical); that stretch reads LAMLWILKSTVAAIIFPVMILALVAV. At 943–1035 the chain is on the cytoplasmic side; it reads RKAMDYFFSQ…PTFLERHTSC (93 aa). Residues 968-1035 form a disordered region; that stretch reads KKKEDEKKKK…PTFLERHTSC (68 aa). Residues 1007-1035 show a composition bias toward basic and acidic residues; that stretch reads IMEKEPFLIDSKPSDRENSPTFLERHTSC.

Belongs to the anion exchanger (TC 2.A.31) family. As to quaternary structure, homodimer. In terms of tissue distribution, expressed in kidney and to a lower extent in bladder, brain, intestine, large intestine and eye.

It is found in the basolateral cell membrane. Its subcellular location is the cell membrane. It catalyses the reaction 2 hydrogencarbonate(out) + Na(+)(out) = 2 hydrogencarbonate(in) + Na(+)(in). The enzyme catalyses 3 hydrogencarbonate(out) + Na(+)(out) = 3 hydrogencarbonate(in) + Na(+)(in). Electrogenic sodium/bicarbonate cotransporter with a Na(+):HCO3(-) stoichiometry varying from 1:2 to 1:3. May regulate bicarbonate influx/efflux at the basolateral membrane of cells and regulate intracellular pH. This chain is Electrogenic sodium bicarbonate cotransporter 1 (SLC4A4), found in Ambystoma tigrinum (Eastern tiger salamander).